The primary structure comprises 1136 residues: Probable RNA-dependent RNA polymerase 2 (1136 aa).

The tract at residues 965–989 is disordered; that stretch reads SGDSGALSSSSAQPSPTYDPDLEVP. The segment covering 967–980 has biased composition (low complexity); it reads DSGALSSSSAQPSP.

Belongs to the RdRP family.

It catalyses the reaction RNA(n) + a ribonucleoside 5'-triphosphate = RNA(n+1) + diphosphate. In terms of biological role, probably involved in the RNA silencing pathway and required for the generation of small interfering RNAs (siRNAs). This is Probable RNA-dependent RNA polymerase 2 (RDR2) from Oryza sativa subsp. japonica (Rice).